Here is a 506-residue protein sequence, read N- to C-terminus: Histidine ammonia-lyase (506 aa).

The segment at residues 143–145 (ASG) is a cross-link (5-imidazolinone (Ala-Gly)). Ser144 bears the 2,3-didehydroalanine (Ser) mark.

This sequence belongs to the PAL/histidase family. Contains an active site 4-methylidene-imidazol-5-one (MIO), which is formed autocatalytically by cyclization and dehydration of residues Ala-Ser-Gly.

The protein localises to the cytoplasm. The catalysed reaction is L-histidine = trans-urocanate + NH4(+). The protein operates within amino-acid degradation; L-histidine degradation into L-glutamate; N-formimidoyl-L-glutamate from L-histidine: step 1/3. This chain is Histidine ammonia-lyase, found in Salmonella paratyphi C (strain RKS4594).